The chain runs to 287 residues: 4-diphosphocytidyl-2-C-methyl-D-erythritol kinase (287 aa).

Lysine 12 is a catalytic residue. 94–104 (PAQAGMGGGSS) provides a ligand contact to ATP. Aspartate 136 is an active-site residue.

This sequence belongs to the GHMP kinase family. IspE subfamily.

It catalyses the reaction 4-CDP-2-C-methyl-D-erythritol + ATP = 4-CDP-2-C-methyl-D-erythritol 2-phosphate + ADP + H(+). It participates in isoprenoid biosynthesis; isopentenyl diphosphate biosynthesis via DXP pathway; isopentenyl diphosphate from 1-deoxy-D-xylulose 5-phosphate: step 3/6. Functionally, catalyzes the phosphorylation of the position 2 hydroxy group of 4-diphosphocytidyl-2C-methyl-D-erythritol. The sequence is that of 4-diphosphocytidyl-2-C-methyl-D-erythritol kinase from Albidiferax ferrireducens (strain ATCC BAA-621 / DSM 15236 / T118) (Rhodoferax ferrireducens).